The chain runs to 209 residues: PITH domain-containing protein 1 (209 aa).

The PITH domain occupies 18–190 (SDGPERGLEY…EVTICNYEAA (173 aa)).

This sequence belongs to the PITHD1 family.

Its subcellular location is the cytoplasm. May play a role in promoting megakaryocyte differentiation by up-regulating RUNX1 expression. The polypeptide is PITH domain-containing protein 1 (pithd1) (Xenopus laevis (African clawed frog)).